Reading from the N-terminus, the 77-residue chain is Omega-conotoxin-like SO-5 (77 aa).

A signal peptide spans 1 to 22 (MKLTCVMIVAVLLLTACQLITA). A propeptide spanning residues 23-42 (DDSRGTQKHRSLRSTTKVSK) is cleaved from the precursor. 3 disulfides stabilise this stretch: C46-C61, C53-C64, and C60-C71.

It belongs to the conotoxin O1 superfamily. In terms of tissue distribution, expressed by the venom duct.

It localises to the secreted. In terms of biological role, omega-conotoxins act at presynaptic membranes, they bind and block voltage-gated calcium channels (Cav). The sequence is that of Omega-conotoxin-like SO-5 (SO5) from Conus striatus (Striated cone).